We begin with the raw amino-acid sequence, 71 residues long: Augerpeptide-s7a (71 aa).

The first 20 residues, 1–20 (MSALKFVLICGLVLLLIETI), serve as a signal peptide directing secretion. A propeptide spanning residues 21 to 29 (PGVSLNLMR) is cleaved from the precursor. 3 disulfides stabilise this stretch: Cys36/Cys48, Cys42/Cys65, and Cys47/Cys68.

In terms of tissue distribution, expressed by the venom duct.

It is found in the secreted. Functionally, elicits an uncoordinated twisting syndrome when injected into C.elegans, but has no effect on mice. The polypeptide is Augerpeptide-s7a (Terebra subulata (Chocolate spotted auger)).